The sequence spans 561 residues: Arginine--tRNA ligase (561 aa).

A 'HIGH' region motif is present at residues 129–139; it reads ANPTGPLHIGH.

The protein belongs to the class-I aminoacyl-tRNA synthetase family. Monomer.

The protein localises to the cytoplasm. It catalyses the reaction tRNA(Arg) + L-arginine + ATP = L-arginyl-tRNA(Arg) + AMP + diphosphate. The polypeptide is Arginine--tRNA ligase (Geotalea uraniireducens (strain Rf4) (Geobacter uraniireducens)).